Reading from the N-terminus, the 649-residue chain is Protein phosphatase Slingshot homolog 3 (649 aa).

Polar residues predominate over residues 1-20; the sequence is MALVTVSRSPPASGHSTPVG. The disordered stretch occupies residues 1–32; sequence MALVTVSRSPPASGHSTPVGPTQDRVVRRRGR. Ala2 carries the N-acetylalanine modification. 2 positions are modified to phosphoserine: Ser9 and Ser38. Positions 49-90 are disordered; sequence LQDGGDSNVASEADSEPMEEPSGEEQPTEDQTDKGQGLQSPW. Residues 61–78 are compositionally biased toward acidic residues; sequence ADSEPMEEPSGEEQPTED. Ser88 carries the post-translational modification Phosphoserine. The 56-residue stretch at 266–321 folds into the DEK-C domain; the sequence is EKMEQAILAELWQVLDTSDLDSVTSKEIRQALELRLGCPLQQYRDFIDNQMLLLMA. The 142-residue stretch at 325–466 folds into the Tyrosine-protein phosphatase domain; it reads RASRIFPHLY…LRTYQGILTA (142 aa). The active-site Phosphocysteine intermediate is the Cys410. 2 stretches are compositionally biased toward low complexity: residues 541-551 and 608-627; these read LEPSESESTPE and TRAF…GMSS. 2 disordered regions span residues 541–586 and 608–649; these read LEPS…KGPW and TRAF…EDKA. Residues 639 to 649 are compositionally biased toward basic and acidic residues; it reads SVDDSREEDKA.

It belongs to the protein-tyrosine phosphatase family. In terms of assembly, does not bind to, or colocalize with, filamentous actin. As to expression, expressed in brain, small intestine and testis. Also expressed at lower levels in heart, kidney, liver, spleen and thymus.

Its subcellular location is the cytoplasm. It is found in the cytoskeleton. The protein localises to the nucleus. It catalyses the reaction O-phospho-L-tyrosyl-[protein] + H2O = L-tyrosyl-[protein] + phosphate. The catalysed reaction is O-phospho-L-seryl-[protein] + H2O = L-seryl-[protein] + phosphate. The enzyme catalyses O-phospho-L-threonyl-[protein] + H2O = L-threonyl-[protein] + phosphate. In terms of biological role, protein phosphatase which may play a role in the regulation of actin filament dynamics. Can dephosphorylate and activate the actin binding/depolymerizing factor cofilin, which subsequently binds to actin filaments and stimulates their disassembly. In Mus musculus (Mouse), this protein is Protein phosphatase Slingshot homolog 3 (Ssh3).